The sequence spans 239 residues: 2,3,4,5-tetrahydropyridine-2,6-dicarboxylate N-acetyltransferase (239 aa).

This sequence belongs to the transferase hexapeptide repeat family. DapH subfamily.

It catalyses the reaction (S)-2,3,4,5-tetrahydrodipicolinate + acetyl-CoA + H2O = L-2-acetamido-6-oxoheptanedioate + CoA. It functions in the pathway amino-acid biosynthesis; L-lysine biosynthesis via DAP pathway; LL-2,6-diaminopimelate from (S)-tetrahydrodipicolinate (acetylase route): step 1/3. Its function is as follows. Catalyzes the transfer of an acetyl group from acetyl-CoA to tetrahydrodipicolinate. This chain is 2,3,4,5-tetrahydropyridine-2,6-dicarboxylate N-acetyltransferase, found in Staphylococcus aureus (strain bovine RF122 / ET3-1).